The primary structure comprises 554 residues: MSQYAPFIKPYIEYNQFGWGPCDMPDMEVPYQPFCKSDRLGKISDWMMPVQEKKYANKYASTFGSNNSQYAYFHEDDDATFHLVDGGNPRALKPYQRNRYRPNQRNNVRVHGRNVRGNAAIGGGQGGAGGTGGAGVGNKYGKGRDMRRGNMGRRFMRNAPVRLRESSVVVRSDWVSIEEIDFPRLLKLSLPNIKDGVDVVTCGTLEYYDKQCDRINVKNERPLQKIDRIINVPGTIDDPIIRRLSKSMGNVFATDDIIATLMCCTRSNYSWDIVIEKLGTKVFLDKRDNAQFDLLTVNETALEPPQDEEGSINSPQSLSLEATLINHNFSQQVLKIGEQEPKHKFDEPNPFEEPGVELASVAYRYKEWQLGDDVVLIARCKHNGVIKSPAGELQFLSIKALNEWDSKAANSVEWRQKLDSQRGAVLASELRNNACKLAKWTVEAVLAGSDQLKLGYVSRVNRKDHLRHVILGMQQFKPQEFATQINLNMDNAWGVLRCLVDIVLKQPDGKYLIMKDPNKPMIRLYDIPDNAFDSDGNDDEETSDDRPFLKSLGN.

The tract at residues 116-149 (RGNAAIGGGQGGAGGTGGAGVGNKYGKGRDMRRG) is disordered. Gly residues predominate over residues 120 to 140 (AIGGGQGGAGGTGGAGVGNKY). Residues 291–305 (QFDLLTVNETALEPP) are RNA gate. Residues 532–554 (FDSDGNDDEETSDDRPFLKSLGN) form a disordered region.

It belongs to the eIF-3 subunit D family. As to quaternary structure, component of the eukaryotic translation initiation factor 3 (eIF-3) complex. The eIF-3 complex interacts with pix.

The protein resides in the cytoplasm. MRNA cap-binding component of the eukaryotic translation initiation factor 3 (eIF-3) complex, which is involved in protein synthesis of a specialized repertoire of mRNAs and, together with other initiation factors, stimulates binding of mRNA and methionyl-tRNAi to the 40S ribosome. The eIF-3 complex specifically targets and initiates translation of a subset of mRNAs involved in cell proliferation. In the eIF-3 complex, eif3d specifically recognizes and binds the 7-methylguanosine cap of a subset of mRNAs. The chain is Eukaryotic translation initiation factor 3 subunit D-2 from Drosophila virilis (Fruit fly).